The sequence spans 321 residues: 2,3,4,5-tetrahydropyridine-2,6-dicarboxylate N-succinyltransferase (321 aa).

Positions 166 and 183 each coordinate Mg(2+). The active-site Acyl-anhydride intermediate is the Glu-199. Succinyl-CoA-binding positions include Arg-201, Gly-216, Ser-219, Ala-242, 257–258 (EA), Gly-265, Lys-281, and 294–297 (RRNS).

The protein belongs to the type 2 tetrahydrodipicolinate N-succinyltransferase family. Homotrimer.

It localises to the cytoplasm. It carries out the reaction (S)-2,3,4,5-tetrahydrodipicolinate + succinyl-CoA + H2O = (S)-2-succinylamino-6-oxoheptanedioate + CoA. It participates in amino-acid biosynthesis; L-lysine biosynthesis via DAP pathway; LL-2,6-diaminopimelate from (S)-tetrahydrodipicolinate (succinylase route): step 1/3. Its function is as follows. Catalyzes the conversion of the cyclic tetrahydrodipicolinate (THDP) into the acyclic N-succinyl-L-2-amino-6-oxopimelate using succinyl-CoA. The chain is 2,3,4,5-tetrahydropyridine-2,6-dicarboxylate N-succinyltransferase from Micrococcus luteus (strain ATCC 4698 / DSM 20030 / JCM 1464 / CCM 169 / CCUG 5858 / IAM 1056 / NBRC 3333 / NCIMB 9278 / NCTC 2665 / VKM Ac-2230) (Micrococcus lysodeikticus).